The following is a 593-amino-acid chain: Zinc metalloproteinase-disintegrin-like kaouthiagin-like (593 aa).

Residues 1–20 form the signal peptide; it reads MIQALLVIICLAVFPHQGSS. A propeptide spanning residues 21 to 196 is cleaved from the precursor; that stretch reads IILESGNVND…KTSQFTNTPE (176 aa). The Peptidase M12B domain maps to 205-400; the sequence is KYIEFYVIVD…DRPQCILNKP (196 aa). The Ca(2+) site is built by Glu-208 and Asp-292. Intrachain disulfides connect Cys-316–Cys-395, Cys-356–Cys-379, and Cys-358–Cys-363. Asn-319 carries N-linked (GlcNAc...) asparagine glycosylation. Positions 341, 345, and 351 each coordinate Zn(2+). Ca(2+)-binding residues include Cys-395, Asn-398, Ile-410, Asn-413, Phe-415, Glu-417, Glu-420, and Asp-423. The 70-residue stretch at 408–477 folds into the Disintegrin domain; it reads PPICGNYFVE…ECPTDSLQRN (70 aa). Cystine bridges form between Cys-411-Cys-440, Cys-422-Cys-435, Cys-424-Cys-430, Cys-434-Cys-462, Cys-449-Cys-469, Cys-456-Cys-488, Cys-481-Cys-493, Cys-500-Cys-550, Cys-515-Cys-558, Cys-528-Cys-538, Cys-545-Cys-581, and Cys-575-Cys-586. The D/ECD-tripeptide signature appears at 455–457; that stretch reads DCD. Ca(2+) is bound by residues Asp-457, Leu-458, Glu-460, Asp-472, and Ser-473. An N-linked (GlcNAc...) asparagine glycan is attached at Asn-490.

The protein belongs to the venom metalloproteinase (M12B) family. P-III subfamily. P-IIIa sub-subfamily. In terms of assembly, monomer. It depends on Zn(2+) as a cofactor. As to expression, expressed by the venom gland.

The protein localises to the secreted. Its function is as follows. Snake venom zinc metalloproteinase that cleaves the membrane-bound precursor of TNF-alpha (TNF) into its mature soluble form showing the same digestion pattern than ADAM17. This Naja atra (Chinese cobra) protein is Zinc metalloproteinase-disintegrin-like kaouthiagin-like.